Consider the following 88-residue polypeptide: UPF0223 protein BH2638 (88 aa).

It belongs to the UPF0223 family.

This chain is UPF0223 protein BH2638, found in Halalkalibacterium halodurans (strain ATCC BAA-125 / DSM 18197 / FERM 7344 / JCM 9153 / C-125) (Bacillus halodurans).